A 192-amino-acid polypeptide reads, in one-letter code: Orotate phosphoribosyltransferase (192 aa).

116-124 is a 5-phospho-alpha-D-ribose 1-diphosphate binding site; that stretch reads EDIVTTGLS. Orotate contacts are provided by T120 and R148.

Belongs to the purine/pyrimidine phosphoribosyltransferase family. PyrE subfamily. Homodimer. Mg(2+) serves as cofactor.

It carries out the reaction orotidine 5'-phosphate + diphosphate = orotate + 5-phospho-alpha-D-ribose 1-diphosphate. It functions in the pathway pyrimidine metabolism; UMP biosynthesis via de novo pathway; UMP from orotate: step 1/2. Catalyzes the transfer of a ribosyl phosphate group from 5-phosphoribose 1-diphosphate to orotate, leading to the formation of orotidine monophosphate (OMP). The chain is Orotate phosphoribosyltransferase from Brucella abortus (strain S19).